We begin with the raw amino-acid sequence, 606 residues long: Zinc finger protein 652 (606 aa).

S57 carries the phosphoserine modification. Residues 71-97 (HLHETEEQPYFRETRAVSDVHAVKEDR) show a composition bias toward basic and acidic residues. Disordered regions lie at residues 71–113 (HLHE…VSYK) and 130–235 (VSKG…APVQ). Residues 98–109 (ENSDDTEEEEEE) are compositionally biased toward acidic residues. S100 carries the phosphoserine modification. T103 is modified (phosphothreonine). Over residues 137–149 (VSSQSKETPVLKT) the composition is skewed to polar residues. The span at 152 to 170 (EEEEEESEEEATDDSNDYG) shows a compositional bias: acidic residues. The span at 171 to 183 (ENEKQKKKEKIVE) shows a compositional bias: basic and acidic residues. Over residues 184 to 209 (KVSVTQRRTRRAASVAAATTSPTPRT) the composition is skewed to low complexity. Phosphoserine is present on residues S197 and S204. A C2H2-type 1 zinc finger spans residues 245–268 (LTCEKCPRVFNTRWYLEKHMNVTH). The C2H2-type 2; degenerate zinc finger occupies 272–294 (QICDKCGKKFVLESELSLHQQTD). C2H2-type zinc fingers lie at residues 299–322 (IQCVSCNKSFKKLWSLHEHIKIVH), 329–351 (FSCEICEKKFYTMAHVRKHMVAH), 357–379 (FTCETCGKSFKRSMSLKVHSLQH), 385–407 (FRCENCDERFQYKYQLRSHMSIH), 413–435 (FMCQWCGKDFNMKQYFDEHMKTH), and 441–463 (FICEICGKSFTSRPNMKRHRRTH). The C2H2-type 9; degenerate zinc-finger motif lies at 469 to 492 (YPCDVCGQRFRFSNMLKAHKEKCF). Residues 498–606 (VNVPPAVQIP…AEKNSSAQHH (109 aa)) are mediates interaction with CBFA2T3.

The protein belongs to the krueppel C2H2-type zinc-finger protein family. Interacts with CBFA2T3. In terms of tissue distribution, widely expressed with higher expression in breast, prostate, vulva and pancreas.

The protein localises to the nucleus. Functions as a transcriptional repressor. In Homo sapiens (Human), this protein is Zinc finger protein 652 (ZNF652).